Reading from the N-terminus, the 288-residue chain is 4-hydroxy-tetrahydrodipicolinate synthase (288 aa).

Thr-42 contributes to the pyruvate binding site. Residue Tyr-129 is the Proton donor/acceptor of the active site. Lys-158 acts as the Schiff-base intermediate with substrate in catalysis. Ile-200 contacts pyruvate.

The protein belongs to the DapA family. Homotetramer; dimer of dimers.

It is found in the cytoplasm. It catalyses the reaction L-aspartate 4-semialdehyde + pyruvate = (2S,4S)-4-hydroxy-2,3,4,5-tetrahydrodipicolinate + H2O + H(+). It participates in amino-acid biosynthesis; L-lysine biosynthesis via DAP pathway; (S)-tetrahydrodipicolinate from L-aspartate: step 3/4. Functionally, catalyzes the condensation of (S)-aspartate-beta-semialdehyde [(S)-ASA] and pyruvate to 4-hydroxy-tetrahydrodipicolinate (HTPA). The polypeptide is 4-hydroxy-tetrahydrodipicolinate synthase (Thermosipho melanesiensis (strain DSM 12029 / CIP 104789 / BI429)).